A 271-amino-acid polypeptide reads, in one-letter code: Thermoregulatory protein LcrF (271 aa).

The HTH araC/xylS-type domain occupies 167-265; sequence ERLQKFMEEN…GCTPSQARLT (99 aa). 2 DNA-binding regions (H-T-H motif) span residues 184–205 and 232–255; these read SKFAREFGMGLTTFKELFGTVY and IVDIAMEAGFSSQSYFTQSYRRRF.

In terms of biological role, transcriptional activator of the thermally regulated virulent yopE gene. LcrF activity could be modulated by the interaction with an inducer molecule serving as a temperature messenger. The availability of the messenger would in turn be controlled by a temperature-responsive process serving as a cellular thermometer. The sequence is that of Thermoregulatory protein LcrF (lcrF) from Yersinia pestis.